We begin with the raw amino-acid sequence, 269 residues long: Regulatory protein RecX (269 aa).

It belongs to the RecX family.

It localises to the cytoplasm. In terms of biological role, modulates RecA activity. The polypeptide is Regulatory protein RecX (Listeria welshimeri serovar 6b (strain ATCC 35897 / DSM 20650 / CCUG 15529 / CIP 8149 / NCTC 11857 / SLCC 5334 / V8)).